The primary structure comprises 594 residues: Golgi-associated RAB2 interactor protein 4 (594 aa).

Positions 390-525 (AAGLPVSTRQ…SSGSSKRLGR (136 aa)) are disordered. A compositionally biased stretch (polar residues) spans 396 to 406 (STRQSKSSLSG). Basic and acidic residues-rich tracts occupy residues 408–433 (HGRERTQASAEACKEGRERREKDKAL), 442–455 (TGESRHKTRGDKIA), and 468–477 (ASRDGKKEKG). The segment covering 510–521 (RSSSTTSSGSSK) has biased composition (low complexity).

This sequence belongs to the GARIN family. As to quaternary structure, interacts (via N-terminus) with RAB2B (in GTP-bound form).

The protein resides in the golgi apparatus. RAB2B effector protein required for the compacted Golgi morphology, probably through interaction with small GTPase RAB2B. The chain is Golgi-associated RAB2 interactor protein 4 (GARIN4) from Macaca fascicularis (Crab-eating macaque).